Here is a 417-residue protein sequence, read N- to C-terminus: Bifunctional thiamine biosynthesis protein ThiDN (417 aa).

The interval 1 to 235 (MVILAIGGYD…KSKFGYNSNP (235 aa)) is hydroxymethylpyrimidine/phosphomethylpyrimidine kinase. Q41 contacts 4-amino-5-hydroxymethyl-2-methylpyrimidine. The thiamine-phosphate synthase stretch occupies residues 236–417 (TYINKEKVIK…VIQKIYNTLM (182 aa)).

The protein in the N-terminal section; belongs to the ThiD family. This sequence in the C-terminal section; belongs to the ThiN family.

It carries out the reaction 4-amino-5-hydroxymethyl-2-methylpyrimidine + ATP = 4-amino-2-methyl-5-(phosphooxymethyl)pyrimidine + ADP + H(+). The catalysed reaction is 4-amino-2-methyl-5-(phosphooxymethyl)pyrimidine + ATP = 4-amino-2-methyl-5-(diphosphooxymethyl)pyrimidine + ADP. It catalyses the reaction 2-[(2R,5Z)-2-carboxy-4-methylthiazol-5(2H)-ylidene]ethyl phosphate + 4-amino-2-methyl-5-(diphosphooxymethyl)pyrimidine + 2 H(+) = thiamine phosphate + CO2 + diphosphate. The enzyme catalyses 2-(2-carboxy-4-methylthiazol-5-yl)ethyl phosphate + 4-amino-2-methyl-5-(diphosphooxymethyl)pyrimidine + 2 H(+) = thiamine phosphate + CO2 + diphosphate. It carries out the reaction 4-methyl-5-(2-phosphooxyethyl)-thiazole + 4-amino-2-methyl-5-(diphosphooxymethyl)pyrimidine + H(+) = thiamine phosphate + diphosphate. It participates in cofactor biosynthesis; thiamine diphosphate biosynthesis; 4-amino-2-methyl-5-diphosphomethylpyrimidine from 5-amino-1-(5-phospho-D-ribosyl)imidazole. Its pathway is cofactor biosynthesis; thiamine diphosphate biosynthesis; thiamine phosphate from 4-amino-2-methyl-5-diphosphomethylpyrimidine and 4-methyl-5-(2-phosphoethyl)-thiazole: step 1/1. In terms of biological role, catalyzes the phosphorylation of hydroxymethylpyrimidine phosphate (HMP-P) to HMP-PP, and of HMP to HMP-P. Functionally, condenses 4-methyl-5-(beta-hydroxyethyl)thiazole monophosphate (THZ-P) and 4-amino-5-hydroxymethyl pyrimidine pyrophosphate (HMP-PP) to form thiamine monophosphate (TMP). The polypeptide is Bifunctional thiamine biosynthesis protein ThiDN (thiDN) (Methanocaldococcus jannaschii (strain ATCC 43067 / DSM 2661 / JAL-1 / JCM 10045 / NBRC 100440) (Methanococcus jannaschii)).